A 610-amino-acid chain; its full sequence is MCGIVGATSERRVTGILLEGLKRLEYRGYDSAGVAVIDADNHLKSVRRTGKVQELKDAIEQNPLDGTIGIAHTRWATHGGVTEANAHPHRSEDEIAVVHNGIIENHERLREELQAEGYVFNSQTDTEVIAHLIHHERKTHGDLLAAVKSAVRQLEGAYGTVVMDTQYPERLVVARSGSPLVIGVGIGENFVASDQLALLPVTRQFIYLEEGDVADINRTEIDIYDSEGNAVEREVVESDVSYDAGGKGQYRHFMLKEIYEQPIAVRNTLEGRLSEISVLDNAFGENAADILKDIEHVQIVACGTSYHAGMVARYWLESMANVSCNVEIASEFRYRKSYVHPNSLLVTISQSGETADTLAALRLSKKLGYKGSLTICNVGSSSMVRESDLAFLTRAGAEIGVASTKAFTTQLTGLLMLTLGIGKYRGMPEQQQEAVVHALQALPTKLEEAVSLADEIEELAQDFANKEHSLFLGRGNQYPIAMEGALKLKEISYIHAEAYAAGELKHGPLALIDEEMPVIVVAPNNDLLEKLKSNVEEVRARGGLMYVFADKNARFKGDDSLTVLNVCHCDEVIAPIVYTVPLQLLSYYVALIKGTDVDQPRNLAKSVTVE.

The Nucleophile; for GATase activity role is filled by Cys-2. The Glutamine amidotransferase type-2 domain occupies 2–219 (CGIVGATSER…EGDVADINRT (218 aa)). SIS domains are found at residues 287–427 (AADI…YRGM) and 459–600 (LAQD…VDQP). Lys-605 acts as the For Fru-6P isomerization activity in catalysis.

As to quaternary structure, homodimer.

It is found in the cytoplasm. The catalysed reaction is D-fructose 6-phosphate + L-glutamine = D-glucosamine 6-phosphate + L-glutamate. Its function is as follows. Catalyzes the first step in hexosamine metabolism, converting fructose-6P into glucosamine-6P using glutamine as a nitrogen source. The protein is Glutamine--fructose-6-phosphate aminotransferase [isomerizing] of Idiomarina loihiensis (strain ATCC BAA-735 / DSM 15497 / L2-TR).